Reading from the N-terminus, the 347-residue chain is Aromatic amino acid aminotransferase (347 aa).

Lys-214 is modified (N6-(pyridoxal phosphate)lysine).

This sequence belongs to the class-II pyridoxal-phosphate-dependent aminotransferase family. In terms of assembly, homodimer. Requires pyridoxal 5'-phosphate as cofactor.

It catalyses the reaction an aromatic L-alpha-amino acid + 2-oxoglutarate = an aromatic oxo-acid + L-glutamate. In terms of biological role, aminotransferase that catalyzes the conversion of aromatic amino acids and 2-oxoglutarate into corresponding aromatic oxo acids and L-glutamate. This is Aromatic amino acid aminotransferase from Mycobacteroides abscessus (strain ATCC 19977 / DSM 44196 / CCUG 20993 / CIP 104536 / JCM 13569 / NCTC 13031 / TMC 1543 / L948) (Mycobacterium abscessus).